The sequence spans 551 residues: Chaperonin GroEL (551 aa).

Residues 30–33 (TLGP), lysine 51, 87–91 (DGTTT), glycine 415, 478–480 (NAA), and aspartate 494 each bind ATP.

Belongs to the chaperonin (HSP60) family. As to quaternary structure, forms a cylinder of 14 subunits composed of two heptameric rings stacked back-to-back. Interacts with the co-chaperonin GroES.

The protein localises to the cytoplasm. It carries out the reaction ATP + H2O + a folded polypeptide = ADP + phosphate + an unfolded polypeptide.. Functionally, together with its co-chaperonin GroES, plays an essential role in assisting protein folding. The GroEL-GroES system forms a nano-cage that allows encapsulation of the non-native substrate proteins and provides a physical environment optimized to promote and accelerate protein folding. The chain is Chaperonin GroEL from Syntrophotalea carbinolica (strain DSM 2380 / NBRC 103641 / GraBd1) (Pelobacter carbinolicus).